A 292-amino-acid polypeptide reads, in one-letter code: 4-hydroxy-tetrahydrodipicolinate synthase (292 aa).

Residue Thr45 participates in pyruvate binding. Catalysis depends on Tyr133, which acts as the Proton donor/acceptor. Catalysis depends on Lys161, which acts as the Schiff-base intermediate with substrate. Ile203 provides a ligand contact to pyruvate.

Belongs to the DapA family. Homotetramer; dimer of dimers.

Its subcellular location is the cytoplasm. It catalyses the reaction L-aspartate 4-semialdehyde + pyruvate = (2S,4S)-4-hydroxy-2,3,4,5-tetrahydrodipicolinate + H2O + H(+). It participates in amino-acid biosynthesis; L-lysine biosynthesis via DAP pathway; (S)-tetrahydrodipicolinate from L-aspartate: step 3/4. In terms of biological role, catalyzes the condensation of (S)-aspartate-beta-semialdehyde [(S)-ASA] and pyruvate to 4-hydroxy-tetrahydrodipicolinate (HTPA). This Vibrio vulnificus (strain YJ016) protein is 4-hydroxy-tetrahydrodipicolinate synthase.